The primary structure comprises 949 residues: MAM domain-containing glycosylphosphatidylinositol anchor protein 1 (949 aa).

Residues 1–18 (MEMICVLFLSLVPAYSRG) form the signal peptide. Ig-like domains follow at residues 24-125 (PAQA…IRVD) and 132-230 (PVLT…KSIT). N-linked (GlcNAc...) asparagine glycans are attached at residues N42 and N90. 2 disulfides stabilise this stretch: C60–C108 and C157–C214. N-linked (GlcNAc...) asparagine glycosylation is found at N235, N247, N257, N292, N307, and N331. The 84-residue stretch at 240-323 (PALKLSVNET…VGNPAKKTVN (84 aa)) folds into the Ig-like 3 domain. C262 and C308 form a disulfide bridge. Ig-like domains are found at residues 338-432 (PDVI…VEVN), 440-531 (PTIS…ALVQ), and 537-625 (PPVV…FQVS). A disulfide bond links C357 and C415. N432 carries N-linked (GlcNAc...) asparagine glycosylation. Disulfide bonds link C463–C513 and C559–C609. N-linked (GlcNAc...) asparagine glycans are attached at residues N577, N649, and N820. A Fibronectin type-III domain is found at 637–737 (TPNPTLSQKQ…ARIIRYMEPI (101 aa)). Residues 745–912 (NTCRFEDEKI…VTLKKGDCPR (168 aa)) form the MAM domain. Residue S926 is the site of GPI-anchor amidated serine attachment. Residues 927–949 (GVSAQHGPCLCGPLTFFLYVLLR) constitute a propeptide, removed in mature form.

As to quaternary structure, interacts heterophilically through its MAM domain with proteins in axon-rich regions and through its Ig-like domains with proteins in differentiating muscle. In terms of tissue distribution, in the embryonic brachial spinal cord, selectively expressed by medial lateral motor column neurons, some populations of dorsal root ganglion neurons, and interneurons.

Its subcellular location is the cell membrane. Its function is as follows. Required for radial migration of cortical neurons in the superficial layer of the neocortex. This is MAM domain-containing glycosylphosphatidylinositol anchor protein 1 from Gallus gallus (Chicken).